The chain runs to 227 residues: Cytochrome c oxidase subunit 2 (227 aa).

Topologically, residues 1 to 14 are mitochondrial intermembrane; sequence MAYPVQLGFQDAAS. A helical transmembrane segment spans residues 15 to 45; sequence PIMEELLYFHDHTLMIMFLISSLVLYIISLM. Over 46–59 the chain is Mitochondrial matrix; that stretch reads LTTELIHTSTMDAQ. A helical membrane pass occupies residues 60–87; it reads EVETVWTILPAVILILIALPSLRILYMM. Topologically, residues 88-227 are mitochondrial intermembrane; the sequence is DEISTPSLTL…HFEEWLLSML (140 aa). 6 residues coordinate Cu cation: His-161, Cys-196, Glu-198, Cys-200, His-204, and Met-207. Mg(2+) is bound at residue Glu-198.

The protein belongs to the cytochrome c oxidase subunit 2 family. Component of the cytochrome c oxidase (complex IV, CIV), a multisubunit enzyme composed of 14 subunits. The complex is composed of a catalytic core of 3 subunits MT-CO1, MT-CO2 and MT-CO3, encoded in the mitochondrial DNA, and 11 supernumerary subunits COX4I, COX5A, COX5B, COX6A, COX6B, COX6C, COX7A, COX7B, COX7C, COX8 and NDUFA4, which are encoded in the nuclear genome. The complex exists as a monomer or a dimer and forms supercomplexes (SCs) in the inner mitochondrial membrane with NADH-ubiquinone oxidoreductase (complex I, CI) and ubiquinol-cytochrome c oxidoreductase (cytochrome b-c1 complex, complex III, CIII), resulting in different assemblies (supercomplex SCI(1)III(2)IV(1) and megacomplex MCI(2)III(2)IV(2)). Found in a complex with TMEM177, COA6, COX18, COX20, SCO1 and SCO2. Interacts with TMEM177 in a COX20-dependent manner. Interacts with COX20. Interacts with COX16. Requires Cu cation as cofactor.

The protein resides in the mitochondrion inner membrane. It catalyses the reaction 4 Fe(II)-[cytochrome c] + O2 + 8 H(+)(in) = 4 Fe(III)-[cytochrome c] + 2 H2O + 4 H(+)(out). Functionally, component of the cytochrome c oxidase, the last enzyme in the mitochondrial electron transport chain which drives oxidative phosphorylation. The respiratory chain contains 3 multisubunit complexes succinate dehydrogenase (complex II, CII), ubiquinol-cytochrome c oxidoreductase (cytochrome b-c1 complex, complex III, CIII) and cytochrome c oxidase (complex IV, CIV), that cooperate to transfer electrons derived from NADH and succinate to molecular oxygen, creating an electrochemical gradient over the inner membrane that drives transmembrane transport and the ATP synthase. Cytochrome c oxidase is the component of the respiratory chain that catalyzes the reduction of oxygen to water. Electrons originating from reduced cytochrome c in the intermembrane space (IMS) are transferred via the dinuclear copper A center (CU(A)) of subunit 2 and heme A of subunit 1 to the active site in subunit 1, a binuclear center (BNC) formed by heme A3 and copper B (CU(B)). The BNC reduces molecular oxygen to 2 water molecules using 4 electrons from cytochrome c in the IMS and 4 protons from the mitochondrial matrix. The polypeptide is Cytochrome c oxidase subunit 2 (MT-CO2) (Eulemur macaco (Black lemur)).